The chain runs to 545 residues: Thermosome subunit beta (545 aa).

Belongs to the TCP-1 chaperonin family. As to quaternary structure, forms a Heterooligomeric complex of two stacked eight-membered rings.

Molecular chaperone; binds unfolded polypeptides in vitro, and has a weak ATPase activity. The protein is Thermosome subunit beta (thsB) of Archaeoglobus fulgidus (strain ATCC 49558 / DSM 4304 / JCM 9628 / NBRC 100126 / VC-16).